Consider the following 464-residue polypeptide: Glutamate--tRNA ligase (464 aa).

The short motif at 9–19 (PSPTGYLHIGG) is the 'HIGH' region element. Positions 242–246 (KISKR) match the 'KMSKS' region motif. Residue Lys-245 coordinates ATP.

Belongs to the class-I aminoacyl-tRNA synthetase family. Glutamate--tRNA ligase type 1 subfamily. As to quaternary structure, monomer.

The protein resides in the cytoplasm. The catalysed reaction is tRNA(Glu) + L-glutamate + ATP = L-glutamyl-tRNA(Glu) + AMP + diphosphate. Catalyzes the attachment of glutamate to tRNA(Glu) in a two-step reaction: glutamate is first activated by ATP to form Glu-AMP and then transferred to the acceptor end of tRNA(Glu). This Neisseria gonorrhoeae (strain ATCC 700825 / FA 1090) protein is Glutamate--tRNA ligase.